The sequence spans 546 residues: Tryptophan biosynthesis protein TrpCD (546 aa).

The indole-3-glycerol phosphate synthase stretch occupies residues 1–226; sequence MMDFGFVDSL…FVQTVCGGEK (226 aa). The interval 227–546 is anthranilate phosphoribosyltransferase; sequence MIEDVLRGLD…EEIACKSTSM (320 aa). 5-phospho-alpha-D-ribose 1-diphosphate contacts are provided by residues Gly295, 298–299, Ser303, 305–308, 322–330, and Ser334; these read GD, NVST, and KHGNRAVSS. Gly295 serves as a coordination point for anthranilate. Ser307 serves as a coordination point for Mg(2+). Position 325 (Asn325) interacts with anthranilate. Residue Arg380 participates in anthranilate binding. Mg(2+) contacts are provided by Asp437 and Glu438.

In the N-terminal section; belongs to the TrpC family. The protein in the C-terminal section; belongs to the anthranilate phosphoribosyltransferase family. Requires Mg(2+) as cofactor.

The enzyme catalyses 1-(2-carboxyphenylamino)-1-deoxy-D-ribulose 5-phosphate + H(+) = (1S,2R)-1-C-(indol-3-yl)glycerol 3-phosphate + CO2 + H2O. It catalyses the reaction N-(5-phospho-beta-D-ribosyl)anthranilate + diphosphate = 5-phospho-alpha-D-ribose 1-diphosphate + anthranilate. It participates in amino-acid biosynthesis; L-tryptophan biosynthesis; L-tryptophan from chorismate: step 2/5. It functions in the pathway amino-acid biosynthesis; L-tryptophan biosynthesis; L-tryptophan from chorismate: step 4/5. Its function is as follows. Bifunctional enzyme that catalyzes the second and fourth steps of tryptophan biosynthetic pathway. The second step is catalyzed by the anthranilate phosphoribosyltransferase, coded by the TrpD domain and the fourth step is catalyzed by indole-3-glycerol phosphate synthase, coded by the TrpC domain. This is Tryptophan biosynthesis protein TrpCD (trpCD) from Archaeoglobus fulgidus (strain ATCC 49558 / DSM 4304 / JCM 9628 / NBRC 100126 / VC-16).